A 370-amino-acid chain; its full sequence is NADH-quinone oxidoreductase subunit D 2 (370 aa).

Belongs to the complex I 49 kDa subunit family. NDH-1 is composed of 14 different subunits. Subunits NuoB, C, D, E, F, and G constitute the peripheral sector of the complex.

It is found in the cell inner membrane. The enzyme catalyses a quinone + NADH + 5 H(+)(in) = a quinol + NAD(+) + 4 H(+)(out). NDH-1 shuttles electrons from NADH, via FMN and iron-sulfur (Fe-S) centers, to quinones in the respiratory chain. The immediate electron acceptor for the enzyme in this species is believed to be ubiquinone. Couples the redox reaction to proton translocation (for every two electrons transferred, four hydrogen ions are translocated across the cytoplasmic membrane), and thus conserves the redox energy in a proton gradient. In Solibacter usitatus (strain Ellin6076), this protein is NADH-quinone oxidoreductase subunit D 2.